The chain runs to 160 residues: Putative pre-16S rRNA nuclease (160 aa).

The protein belongs to the YqgF nuclease family.

It is found in the cytoplasm. Could be a nuclease involved in processing of the 5'-end of pre-16S rRNA. This Rhodopseudomonas palustris (strain HaA2) protein is Putative pre-16S rRNA nuclease.